Reading from the N-terminus, the 446-residue chain is Serine decarboxylase 3 (446 aa).

His-162 contributes to the substrate binding site. Lys-274 is subject to N6-(pyridoxal phosphate)lysine.

Belongs to the group II decarboxylase family. Pyridoxal 5'-phosphate serves as cofactor.

The enzyme catalyses L-serine + H(+) = ethanolamine + CO2. In terms of biological role, catalyzes the biosynthesis of ethanolamine from serine. Decarboxylation of free serine is the major source of ethanolamine production in plants and ethanolamine metabolism is crucial for the synthesis of choline, phosphatidylethanolamine (PE) and phosphatidylcholine (PC), and thus for plant growth. The polypeptide is Serine decarboxylase 3 (Oryza sativa subsp. japonica (Rice)).